The chain runs to 152 residues: 3-hydroxyacyl-[acyl-carrier-protein] dehydratase FabZ (152 aa).

H58 is a catalytic residue.

This sequence belongs to the thioester dehydratase family. FabZ subfamily.

Its subcellular location is the cytoplasm. It catalyses the reaction a (3R)-hydroxyacyl-[ACP] = a (2E)-enoyl-[ACP] + H2O. Functionally, involved in unsaturated fatty acids biosynthesis. Catalyzes the dehydration of short chain beta-hydroxyacyl-ACPs and long chain saturated and unsaturated beta-hydroxyacyl-ACPs. This is 3-hydroxyacyl-[acyl-carrier-protein] dehydratase FabZ from Prochlorococcus marinus (strain MIT 9515).